A 199-amino-acid polypeptide reads, in one-letter code: MANRGPSYGLSREVQEKIEQKYDADLENKLVDWIILQCAEDIEHPPPGRTHFQKWLMDGTVLCKLINSLYPPGQEPIPKISESKMAFKQMEQISQFLKAAEVYGVRTTDIFQTVDLWEGKDMAAVQRTLMALGSVAVTKDDGCYRGEPSWFHRKAQQNRRGFSEEQLRQGQNVIGLQMGSNKGASQAGMTGYGMPRQIM.

One can recognise a Calponin-homology (CH) domain in the interval 24 to 136 (ADLENKLVDW…RTLMALGSVA (113 aa)). Ser163 is modified (phosphoserine). One copy of the Calponin-like repeat lies at 174–199 (IGLQMGSNKGASQAGMTGYGMPRQIM). Residues 178 to 188 (MGSNKGASQAG) are compositionally biased toward polar residues. The segment at 178–199 (MGSNKGASQAGMTGYGMPRQIM) is disordered.

Belongs to the calponin family. Abundant and ubiquitous expression in neurons.

This is Transgelin-3 (Tagln3) from Rattus norvegicus (Rat).